Consider the following 96-residue polypeptide: UPF0235 protein KPK_0722 (96 aa).

The protein belongs to the UPF0235 family.

This Klebsiella pneumoniae (strain 342) protein is UPF0235 protein KPK_0722.